Consider the following 393-residue polypeptide: Phospho-N-acetylmuramoyl-pentapeptide-transferase (393 aa).

Transmembrane regions (helical) follow at residues 29-49, 75-95, 101-121, 138-158, 194-214, 226-246, 263-283, 290-310, 315-335, and 370-390; these read RAVM…PWVI, TPTM…LLWF, FVWV…VDDW, YLWQ…SVSE, VSYP…IVGA, GLAI…AYVT, AGEL…FLWF, VFMG…IAVI, IVLG…MAQV, and QVVV…LSTL.

This sequence belongs to the glycosyltransferase 4 family. MraY subfamily. Requires Mg(2+) as cofactor.

The protein resides in the cell inner membrane. The enzyme catalyses UDP-N-acetyl-alpha-D-muramoyl-L-alanyl-gamma-D-glutamyl-meso-2,6-diaminopimeloyl-D-alanyl-D-alanine + di-trans,octa-cis-undecaprenyl phosphate = di-trans,octa-cis-undecaprenyl diphospho-N-acetyl-alpha-D-muramoyl-L-alanyl-D-glutamyl-meso-2,6-diaminopimeloyl-D-alanyl-D-alanine + UMP. It participates in cell wall biogenesis; peptidoglycan biosynthesis. Functionally, catalyzes the initial step of the lipid cycle reactions in the biosynthesis of the cell wall peptidoglycan: transfers peptidoglycan precursor phospho-MurNAc-pentapeptide from UDP-MurNAc-pentapeptide onto the lipid carrier undecaprenyl phosphate, yielding undecaprenyl-pyrophosphoryl-MurNAc-pentapeptide, known as lipid I. This is Phospho-N-acetylmuramoyl-pentapeptide-transferase from Leptothrix cholodnii (strain ATCC 51168 / LMG 8142 / SP-6) (Leptothrix discophora (strain SP-6)).